The primary structure comprises 131 residues: Profilin-2 (131 aa).

This sequence belongs to the profilin family. Occurs in many kinds of cells as a complex with monomeric actin in a 1:1 ratio.

Its subcellular location is the cytoplasm. The protein localises to the cytoskeleton. Binds to actin and affects the structure of the cytoskeleton. At high concentrations, profilin prevents the polymerization of actin, whereas it enhances it at low concentrations. By binding to PIP2, it inhibits the formation of IP3 and DG. This Triticum aestivum (Wheat) protein is Profilin-2 (PRO2).